A 619-amino-acid chain; its full sequence is DNA mismatch repair protein MutL (619 aa).

The segment covering 364 to 375 has biased composition (low complexity); it reads EPASAREPAAPR. Residues 364 to 399 are disordered; that stretch reads EPASAREPAAPRYSTSSGATGGRQPAASWPHAQPGY.

This sequence belongs to the DNA mismatch repair MutL/HexB family.

Functionally, this protein is involved in the repair of mismatches in DNA. It is required for dam-dependent methyl-directed DNA mismatch repair. May act as a 'molecular matchmaker', a protein that promotes the formation of a stable complex between two or more DNA-binding proteins in an ATP-dependent manner without itself being part of a final effector complex. This is DNA mismatch repair protein MutL from Citrobacter koseri (strain ATCC BAA-895 / CDC 4225-83 / SGSC4696).